Consider the following 136-residue polypeptide: Putative pre-16S rRNA nuclease (136 aa).

The protein belongs to the YqgF nuclease family.

It localises to the cytoplasm. Could be a nuclease involved in processing of the 5'-end of pre-16S rRNA. The protein is Putative pre-16S rRNA nuclease of Francisella tularensis subsp. tularensis (strain FSC 198).